An 821-amino-acid chain; its full sequence is Phenylalanine--tRNA ligase beta subunit (821 aa).

The tRNA-binding domain maps to 39-149 (RTWAEGVVVG…DAVTVGEDVR (111 aa)). One can recognise a B5 domain in the interval 409–503 (PLERTLTLRL…RLYGYDRFEE (95 aa)). Residues Asp481, Asp487, Glu490, and Glu491 each coordinate Mg(2+). Residues 724-820 (STYPASDRDL…LVEKYAVTLR (97 aa)) form the FDX-ACB domain.

It belongs to the phenylalanyl-tRNA synthetase beta subunit family. Type 1 subfamily. In terms of assembly, tetramer of two alpha and two beta subunits. Mg(2+) is required as a cofactor.

The protein resides in the cytoplasm. The enzyme catalyses tRNA(Phe) + L-phenylalanine + ATP = L-phenylalanyl-tRNA(Phe) + AMP + diphosphate + H(+). In Thermosynechococcus vestitus (strain NIES-2133 / IAM M-273 / BP-1), this protein is Phenylalanine--tRNA ligase beta subunit.